A 360-amino-acid polypeptide reads, in one-letter code: Phospho-N-acetylmuramoyl-pentapeptide-transferase (360 aa).

Helical transmembrane passes span 27 to 47 (GAMI…INSL), 71 to 91 (TPTM…LLWA), 93 to 113 (LASV…AIGF), 128 to 148 (FSGK…AFTI), 168 to 188 (LVIN…VGAG), 199 to 219 (GLAI…AYLS), 239 to 259 (LAVV…FNAP), 262 to 282 (AIFM…TVAV), 288 to 308 (IVLA…IIQV), and 337 to 357 (QVVI…LSTL).

Belongs to the glycosyltransferase 4 family. MraY subfamily. Requires Mg(2+) as cofactor.

The protein resides in the cell inner membrane. The catalysed reaction is UDP-N-acetyl-alpha-D-muramoyl-L-alanyl-gamma-D-glutamyl-meso-2,6-diaminopimeloyl-D-alanyl-D-alanine + di-trans,octa-cis-undecaprenyl phosphate = di-trans,octa-cis-undecaprenyl diphospho-N-acetyl-alpha-D-muramoyl-L-alanyl-D-glutamyl-meso-2,6-diaminopimeloyl-D-alanyl-D-alanine + UMP. Its pathway is cell wall biogenesis; peptidoglycan biosynthesis. Its function is as follows. Catalyzes the initial step of the lipid cycle reactions in the biosynthesis of the cell wall peptidoglycan: transfers peptidoglycan precursor phospho-MurNAc-pentapeptide from UDP-MurNAc-pentapeptide onto the lipid carrier undecaprenyl phosphate, yielding undecaprenyl-pyrophosphoryl-MurNAc-pentapeptide, known as lipid I. The sequence is that of Phospho-N-acetylmuramoyl-pentapeptide-transferase from Brucella abortus (strain S19).